The chain runs to 38 residues: LGKLLDVYESRLLDVYESRVLDIYESRLGKVLDIYESR.

Belongs to the GST superfamily. Phi family.

The enzyme catalyses RX + glutathione = an S-substituted glutathione + a halide anion + H(+). Conjugation of reduced glutathione to a wide number of exogenous and endogenous hydrophobic electrophiles. In plants, may have a detoxification role against certain herbicides. The protein is Glutathione S-transferase 2 of Populus euphratica (Euphrates poplar).